The sequence spans 743 residues: Capsid protein (743 aa).

Residues 665–706 (YVPPEEDFNIQERQQREQRPWTSESESEAEAQEETQAGSVRE) form a disordered region.

This sequence belongs to the anelloviridae capsid protein family.

The protein resides in the virion. In terms of biological role, self assemble to form an icosahedral capsid. In Torque teno virus (isolate Human/China/CT39F/2001) (TTV), this protein is Capsid protein.